The primary structure comprises 295 residues: MDKRRNLLNISDLTIGDVENITKLANQYLEEKVENSHVLKNKIVINLFFEDSTRTLASFEIAAKSLGANVITLPIKSSSINKGEDLKDMIKTLNAMNPDYMIIRHKSSGIINTLAKHVNCSLINAGDGSSEHPTQALADYLVIISHKKQIKNLKIVICGDILHSRVARSNIRLLKMFGAKISLVAPPALMCKHFSEVDSLHYSLTEGIKDADVIMLLRLQKERMNNNSSEKEYFHLYGLDAQKLSHAKPDAIVMHPGPINRGIEISNDIADCVILQQVKFGLATRKAVLHYLINV.

Carbamoyl phosphate contacts are provided by Arg54 and Thr55. Position 82 (Lys82) interacts with L-aspartate. 3 residues coordinate carbamoyl phosphate: Arg104, His132, and Gln135. The L-aspartate site is built by Arg165 and Arg218. Carbamoyl phosphate-binding residues include Gly257 and Pro258.

The protein belongs to the aspartate/ornithine carbamoyltransferase superfamily. ATCase family. Heterododecamer (2C3:3R2) of six catalytic PyrB chains organized as two trimers (C3), and six regulatory PyrI chains organized as three dimers (R2).

It catalyses the reaction carbamoyl phosphate + L-aspartate = N-carbamoyl-L-aspartate + phosphate + H(+). The protein operates within pyrimidine metabolism; UMP biosynthesis via de novo pathway; (S)-dihydroorotate from bicarbonate: step 2/3. Catalyzes the condensation of carbamoyl phosphate and aspartate to form carbamoyl aspartate and inorganic phosphate, the committed step in the de novo pyrimidine nucleotide biosynthesis pathway. The polypeptide is Aspartate carbamoyltransferase catalytic subunit (Wolbachia pipientis subsp. Culex pipiens (strain wPip)).